We begin with the raw amino-acid sequence, 743 residues long: F-box protein COS111 (743 aa).

Residues 145-191 (ELHIKNLPVEILDYIFYLVDDNLDYKSCMYTCKLFYFLAKPYYYENL) enclose the F-box domain. Disordered regions lie at residues 224 to 257 (IKPG…DPQY) and 311 to 330 (FSNV…SSST). A compositionally biased stretch (acidic residues) spans 229–248 (DEDEQEEGQEENAENGEEEN).

F-box protein probably involved in ubiquitin conjugation pathway. The sequence is that of F-box protein COS111 (COS111) from Candida albicans (strain SC5314 / ATCC MYA-2876) (Yeast).